The chain runs to 330 residues: Ketol-acid reductoisomerase (NADP(+)) (330 aa).

The KARI N-terminal Rossmann domain maps to 1-181; that stretch reads MNAYYEQDAD…GGTKAGVIET (181 aa). NADP(+) is bound by residues 24-27, Arg47, Ser50, Ser52, and 82-85; these read YGSQ and DQYQ. His107 is a catalytic residue. Gly133 serves as a coordination point for NADP(+). One can recognise a KARI C-terminal knotted domain in the interval 182 to 327; the sequence is TFKNETETDL…SKLRDMMSWL (146 aa). Residues Asp190, Glu194, Glu226, and Glu230 each contribute to the Mg(2+) site. Ser251 provides a ligand contact to substrate.

This sequence belongs to the ketol-acid reductoisomerase family. Mg(2+) is required as a cofactor.

The catalysed reaction is (2R)-2,3-dihydroxy-3-methylbutanoate + NADP(+) = (2S)-2-acetolactate + NADPH + H(+). It catalyses the reaction (2R,3R)-2,3-dihydroxy-3-methylpentanoate + NADP(+) = (S)-2-ethyl-2-hydroxy-3-oxobutanoate + NADPH + H(+). It functions in the pathway amino-acid biosynthesis; L-isoleucine biosynthesis; L-isoleucine from 2-oxobutanoate: step 2/4. It participates in amino-acid biosynthesis; L-valine biosynthesis; L-valine from pyruvate: step 2/4. Involved in the biosynthesis of branched-chain amino acids (BCAA). Catalyzes an alkyl-migration followed by a ketol-acid reduction of (S)-2-acetolactate (S2AL) to yield (R)-2,3-dihydroxy-isovalerate. In the isomerase reaction, S2AL is rearranged via a Mg-dependent methyl migration to produce 3-hydroxy-3-methyl-2-ketobutyrate (HMKB). In the reductase reaction, this 2-ketoacid undergoes a metal-dependent reduction by NADPH to yield (R)-2,3-dihydroxy-isovalerate. The sequence is that of Ketol-acid reductoisomerase (NADP(+)) from Chlorobium limicola (strain DSM 245 / NBRC 103803 / 6330).